The following is a 332-amino-acid chain: Adenosine receptor A2b (332 aa).

Residues 1 to 8 (MQLETQDA) lie on the Extracellular side of the membrane. A helical membrane pass occupies residues 9–33 (LYVALELVIAALAVAGNVLVCAAVG). Over 34 to 43 (ASSALQTPTN) the chain is Cytoplasmic. A helical membrane pass occupies residues 44-67 (YFLVSLATADVAVGLFAIPFAITI). At 68–78 (SLGFCTDFHSC) the chain is on the extracellular side. C78 and C171 are joined by a disulfide. A helical membrane pass occupies residues 79–101 (LFLACFVLVLTQSSIFSLLAVAV). The Cytoplasmic segment spans residues 102–121 (DRYLAIRVPLRYKGLVTGTR). Residues 122-144 (ARGIIAVLWVLAFGIGLTPFLGW) traverse the membrane as a helical segment. Topologically, residues 145–178 (NSKDRATSNCTEPGDGITNKSCCPVKCLFENVVP) are extracellular. N153 and N163 each carry an N-linked (GlcNAc...) asparagine glycan. An adenosine-binding site is contributed by E174. Residues 179–203 (MSYMVYFNFFGCVLPPLLIMMVIYI) form a helical membrane-spanning segment. At 204–235 (KIFMVACKQLQHMELMEHSRTTLQREIHAAKS) the chain is on the cytoplasmic side. The helical transmembrane segment at 236–259 (LAMIVGIFALCWLPVHAINCITLF) threads the bilayer. Residue N254 participates in adenosine binding. The Extracellular segment spans residues 260 to 267 (HPALAKDK). Residues 268-291 (PKWVMNVAILLSHANSVVNPIVYA) form a helical membrane-spanning segment. 2 residues coordinate adenosine: S279 and H280. At 292-332 (YRNRDFRYSFHRIISRYVLCQTDTKGGSGQAGGQSTFSLSL) the chain is on the cytoplasmic side. A lipid anchor (S-palmitoyl cysteine) is attached at C311.

Belongs to the G-protein coupled receptor 1 family.

The protein localises to the cell membrane. Its function is as follows. Receptor for adenosine. The activity of this receptor is mediated by G proteins which activate adenylyl cyclase. The chain is Adenosine receptor A2b (Adora2b) from Rattus norvegicus (Rat).